Reading from the N-terminus, the 314-residue chain is Homeobox-leucine zipper protein HAT7 (314 aa).

Residues 77-109 are disordered; it reads HHHLTQKSPTTTNNMNDQDQVGEEDNLSDDGSH. The segment covering 82–95 has biased composition (polar residues); sequence QKSPTTTNNMNDQD. The segment at residues 112 to 171 is a DNA-binding region (homeobox); the sequence is LGEKKKRLNLEQVRALEKSFELGNKLEPERKMQLAKALGLQPRQIAIWFQNRRARWKTKQ. The leucine-zipper stretch occupies residues 172 to 207; sequence LERDYDSLKKQFDVLKSDNDSLLAHNKKLHAELVAL.

This sequence belongs to the HD-ZIP homeobox family. Class I subfamily. In terms of tissue distribution, expressed predominantly in flowers, and in the cortex of the root and the stem.

It localises to the nucleus. Its function is as follows. Probable transcription factor. The polypeptide is Homeobox-leucine zipper protein HAT7 (HAT7) (Arabidopsis thaliana (Mouse-ear cress)).